Here is a 154-residue protein sequence, read N- to C-terminus: 6,7-dimethyl-8-ribityllumazine synthase (154 aa).

Residues phenylalanine 22, 57–59 (VCE), and 81–83 (TVI) each bind 5-amino-6-(D-ribitylamino)uracil. 86 to 87 (KT) contributes to the (2S)-2-hydroxy-3-oxobutyl phosphate binding site. The active-site Proton donor is the histidine 89. Residue valine 114 participates in 5-amino-6-(D-ribitylamino)uracil binding. Residue arginine 128 participates in (2S)-2-hydroxy-3-oxobutyl phosphate binding.

It belongs to the DMRL synthase family. Forms an icosahedral capsid composed of 60 subunits, arranged as a dodecamer of pentamers.

It catalyses the reaction (2S)-2-hydroxy-3-oxobutyl phosphate + 5-amino-6-(D-ribitylamino)uracil = 6,7-dimethyl-8-(1-D-ribityl)lumazine + phosphate + 2 H2O + H(+). It participates in cofactor biosynthesis; riboflavin biosynthesis; riboflavin from 2-hydroxy-3-oxobutyl phosphate and 5-amino-6-(D-ribitylamino)uracil: step 1/2. Its function is as follows. Catalyzes the formation of 6,7-dimethyl-8-ribityllumazine by condensation of 5-amino-6-(D-ribitylamino)uracil with 3,4-dihydroxy-2-butanone 4-phosphate. This is the penultimate step in the biosynthesis of riboflavin. This Wigglesworthia glossinidia brevipalpis protein is 6,7-dimethyl-8-ribityllumazine synthase.